The sequence spans 82 residues: Small ribosomal subunit protein bS16c (82 aa).

It belongs to the bacterial ribosomal protein bS16 family.

The protein resides in the plastid. It localises to the chloroplast. The sequence is that of Small ribosomal subunit protein bS16c from Porphyra purpurea (Red seaweed).